A 305-amino-acid chain; its full sequence is Acyl transferase (305 aa).

Residues Ser114, Asp211, and His241 each act as charge relay system in the active site.

This sequence belongs to the LuxD family.

It participates in lipid metabolism; fatty acid reduction for biolumincescence. Functionally, acyl transferase is part of the fatty acid reductase system required for aldehyde biosynthesis; it produces fatty acids for the luminescent reaction. The sequence is that of Acyl transferase from Vibrio campbellii (strain ATCC BAA-1116).